Reading from the N-terminus, the 430-residue chain is Synaptotagmin-11 (430 aa).

The Vesicular segment spans residues 1-15 (MAEITNIRPSFDVSP). Residues 16-36 (VAAGLIGASVLVVCVSVTVFV) traverse the membrane as a helical segment. Residues 37 to 430 (WTCCHQQAEK…VAKWHSLSEY (394 aa)) are Cytoplasmic-facing. The disordered stretch occupies residues 132–154 (RSPMTSLTPGESKPTSPSSPEED). Phosphoserine is present on Ser-133. A compositionally biased stretch (low complexity) spans 140-150 (PGESKPTSPSS). 2 consecutive C2 domains span residues 156–278 (MLGS…QLTR) and 290–425 (SRGE…AKWH). Positions 249, 252, and 255 each coordinate Ca(2+).

This sequence belongs to the synaptotagmin family. In terms of assembly, homodimer. Can also form heterodimers. Interacts with PRKN. Interacts (via C2 2 domain) with AGO2 and SND1; the interaction with SND1 is direct. Interacts with KIF1A; the interaction increases in presence of calcium. It depends on Ca(2+) as a cofactor. In terms of processing, ubiquitinated, at least by PRKN, and targeted to the proteasome complex for degradation. Ubiquitination is inhibited by ATP13A2. As to expression, highly expressed in brain and at lower levels in other tissues.

It localises to the cytoplasmic vesicle membrane. The protein resides in the perikaryon. It is found in the golgi apparatus. Its subcellular location is the trans-Golgi network membrane. The protein localises to the recycling endosome membrane. It localises to the lysosome membrane. The protein resides in the cytoplasmic vesicle. It is found in the phagosome. Its subcellular location is the cell projection. The protein localises to the axon. It localises to the dendrite. The protein resides in the postsynaptic density. It is found in the clathrin-coated vesicle membrane. In terms of biological role, synaptotagmin family member involved in vesicular and membrane trafficking which does not bind Ca(2+). Inhibits clathrin-mediated and bulk endocytosis in neurons, functions to ensure precision in vesicle retrieval. Plays an important role in dopamine transmission by regulating endocytosis and the vesicle-recycling process. Essential component of a neuronal vesicular trafficking pathway that differs from the synaptic vesicle trafficking pathway but is crucial for development and synaptic plasticity. In macrophages and microglia, inhibits the conventional cytokine secretion, of at least IL6 and TNF, and phagocytosis. In astrocytes, regulates lysosome exocytosis, mechanism required for the repair of injured astrocyte cell membrane. Required for the ATP13A2-mediated regulation of the autophagy-lysosome pathway. In Rattus norvegicus (Rat), this protein is Synaptotagmin-11.